The primary structure comprises 410 residues: Argininosuccinate synthase (410 aa).

ATP-binding positions include 14–22 (AYSGGLDTS) and A41. The L-citrulline site is built by Y92 and S97. G122 serves as a coordination point for ATP. 3 residues coordinate L-aspartate: T124, N128, and D129. N128 is a binding site for L-citrulline. R132, S183, S192, E268, and Y280 together coordinate L-citrulline.

Belongs to the argininosuccinate synthase family. Type 1 subfamily. In terms of assembly, homotetramer.

The protein resides in the cytoplasm. It carries out the reaction L-citrulline + L-aspartate + ATP = 2-(N(omega)-L-arginino)succinate + AMP + diphosphate + H(+). It functions in the pathway amino-acid biosynthesis; L-arginine biosynthesis; L-arginine from L-ornithine and carbamoyl phosphate: step 2/3. The sequence is that of Argininosuccinate synthase from Parvibaculum lavamentivorans (strain DS-1 / DSM 13023 / NCIMB 13966).